Reading from the N-terminus, the 85-residue chain is Delta/kappa-theraphotoxin-Pm1a (85 aa).

Residues 1–19 (MKTFVFIVLVALAFVLTAA) form the signal peptide. A propeptide spanning residues 20 to 43 (KEERANPSELVSALAELVMLDAER) is cleaved from the precursor. 3 cysteine pairs are disulfide-bonded: Cys50-Cys64, Cys57-Cys69, and Cys63-Cys77.

This sequence belongs to the neurotoxin 10 (Hwtx-1) family. Expressed by the venom gland.

The protein localises to the secreted. Functionally, multimodal toxin that enhances nociceptor excitability mainly by the simultaneous stimulation of repetitive firing (through Nav1.8/SCN10A channel current enhancement) and impairment of repolarization (by inhibiting delayed rectifier current of Kv2.1/KCNB1), with a potential contribution from tetrodotoxin-sensitive voltage-gated sodium channels (Nav) modified excitability. Enhances Nav1.8/SCN10A currents (EC(50)=1.1 uM), modifies the channel gating by a right-shift in steady-state inactivation and delays open-state inactivation. Also decreases Kv2.1/KCNB1 currents (IC(50)=0.43 uM) and causes a depolarizing shift in the voltage dependence of activation without change in steady-state inactivation. In addition, inhibits peak currents of human sodium channels (Nav1.1 to Nav1.7, IC(50)=0.38-2.3 uM) and delays fast inactivation of Nav1.1/SCN1A, Nav1.3/SCN3A, Nav1.6/SCN8A, and Nav1.7/SCN9A. In small dorsal root ganglion neurons, induces hyperexcitability by enhancing tetrodotoxin-resistant sodium currents, impairing repolarization and lowering the threshold of action potential firing, consistent with the severe pain associated with envenomation. In vivo, elicits nocifensive behavior in mice after intraplantar injection. This chain is Delta/kappa-theraphotoxin-Pm1a, found in Pelinobius muticus (King baboon spider).